We begin with the raw amino-acid sequence, 106 residues long: UPF0145 protein SCO3412 (106 aa).

This sequence belongs to the UPF0145 family.

This is UPF0145 protein SCO3412 from Streptomyces coelicolor (strain ATCC BAA-471 / A3(2) / M145).